The primary structure comprises 403 residues: Argininosuccinate synthase (403 aa).

Residues 12 to 20 and alanine 39 contribute to the ATP site; that span reads AYSGGLDTS. The L-citrulline site is built by tyrosine 91 and serine 96. Glycine 121 is a binding site for ATP. L-aspartate-binding residues include threonine 123, asparagine 127, and aspartate 128. L-citrulline is bound at residue asparagine 127. The L-citrulline site is built by arginine 131, serine 180, serine 189, glutamate 265, and tyrosine 277.

It belongs to the argininosuccinate synthase family. Type 1 subfamily. Homotetramer.

The protein resides in the cytoplasm. It catalyses the reaction L-citrulline + L-aspartate + ATP = 2-(N(omega)-L-arginino)succinate + AMP + diphosphate + H(+). The protein operates within amino-acid biosynthesis; L-arginine biosynthesis; L-arginine from L-ornithine and carbamoyl phosphate: step 2/3. This chain is Argininosuccinate synthase, found in Vibrio vulnificus (strain CMCP6).